The sequence spans 1292 residues: ABC multidrug transporter MDR5 (1292 aa).

Residues M1–V43 are disordered. A run of 2 helical transmembrane segments spans residues I79–F99 and L128–F148. An ABC transmembrane type-1 1 domain is found at G81–K370. N-linked (GlcNAc...) asparagine glycosylation occurs at N149. A run of 4 helical transmembrane segments spans residues V202 to Q222, L226 to A246, E314 to L334, and I344 to T364. Residues L405 to A650 enclose the ABC transporter 1 domain. G440–S447 is an ATP binding site. N494 carries an N-linked (GlcNAc...) asparagine glycan. The disordered stretch occupies residues A656–H691. The span at D663–A680 shows a compositional bias: basic and acidic residues. The next 2 membrane-spanning stretches (helical) occupy residues H720 to A740 and L768 to L788. The ABC transmembrane type-1 2 domain occupies L725–K1012. Residue N820 is glycosylated (N-linked (GlcNAc...) asparagine). 4 helical membrane-spanning segments follow: residues I844 to T864, W866 to I886, I949 to F969, and F986 to F1006. N1009, N1031, and N1052 each carry an N-linked (GlcNAc...) asparagine glycan. The 238-residue stretch at V1048–A1285 folds into the ABC transporter 2 domain. G1083–T1090 contributes to the ATP binding site.

It belongs to the ABC transporter superfamily. ABCB family. Multidrug resistance exporter (TC 3.A.1.201) subfamily.

It is found in the cell membrane. The enzyme catalyses itraconazole(in) + ATP + H2O = itraconazole(out) + ADP + phosphate + H(+). Pleiotropic ABC efflux transporter involved in the modulation susceptibility to itraconazole. In Trichophyton rubrum (strain ATCC MYA-4607 / CBS 118892) (Athlete's foot fungus), this protein is ABC multidrug transporter MDR5.